Here is a 37-residue protein sequence, read N- to C-terminus: MRVQPSVKKICRNCKIIRRNRVVRVICTDLRHKQRQG.

It belongs to the bacterial ribosomal protein bL36 family.

This Neisseria meningitidis serogroup C (strain 053442) protein is Large ribosomal subunit protein bL36A.